The chain runs to 113 residues: RING-box protein 2 (113 aa).

The segment at 1–26 (MADVEDGEEPCVLSSHSGSAGSKSGG) is disordered. At A2 the chain carries N-acetylalanine. C50, C53, C61, C64, C73, C80, H82, H85, C87, C88, C99, and C102 together coordinate Zn(2+). Residues 61–103 (CLRCQAENKQEDCVVVWGECNHSFHNCCMSLWVKQNNRCPLCQ) form an RING-type zinc finger.

This sequence belongs to the RING-box family. Catalytic component of multiple cullin-5-RING E3 ubiquitin-protein ligase complexes (ECS complexes, also named CRL5 complexes) composed of CUL5, Elongin BC (ELOB and ELOC), RNF7/RBX2 and a variable SOCS box domain-containing protein as substrate-specific recognition component. Also interacts (with lower preference) with CUL1, CUL2, CUL3, CUL4A and CUL4B; additional evidence is however required to confirm this result in vivo. Interacts with UBE2F. Interacts with CSNK2B, the interaction is not affected by phosphorylation by CK2. May also interact with DCUN1D1, DCUN1D2, DCUN1D3, DCUN1D4 and DCUN1D5.

It is found in the cytoplasm. Its subcellular location is the nucleus. The catalysed reaction is S-ubiquitinyl-[E2 ubiquitin-conjugating enzyme]-L-cysteine + [acceptor protein]-L-lysine = [E2 ubiquitin-conjugating enzyme]-L-cysteine + N(6)-ubiquitinyl-[acceptor protein]-L-lysine.. It carries out the reaction S-[NEDD8-protein]-yl-[E2 NEDD8-conjugating enzyme]-L-cysteine + [cullin]-L-lysine = [E2 NEDD8-conjugating enzyme]-L-cysteine + N(6)-[NEDD8-protein]-yl-[cullin]-L-lysine.. It participates in protein modification; protein ubiquitination. It functions in the pathway protein modification; protein neddylation. Its function is as follows. Catalytic component of multiple cullin-5-RING E3 ubiquitin-protein ligase complexes (ECS complexes), which mediate the ubiquitination and subsequent proteasomal degradation of target proteins. It is thereby involved in various biological processes, such as cell cycle progression, signal transduction and transcription. The functional specificity of the E3 ubiquitin-protein ligase ECS complexes depend on the variable SOCS box-containing substrate recognition component. Within ECS complexes, RNF7/RBX2 recruits the E2 ubiquitination enzyme to the complex via its RING-type and brings it into close proximity to the substrate. Catalytic subunit of various SOCS-containing ECS complexes, such as the ECS(SOCS7) complex, that regulate reelin signaling by mediating ubiquitination and degradation of DAB1. The ECS(SOCS2) complex mediates the ubiquitination and subsequent proteasomal degradation of phosphorylated EPOR and GHR. Promotes ubiquitination and degradation of NF1, thereby regulating Ras protein signal transduction. As part of the ECS(ASB9) complex, catalyzes ubiquitination and degradation of CKB. The ECS(SPSB3) complex catalyzes ubiquitination of nuclear CGAS. As part of the ECS(RAB40C) complex, mediates ANKRD28 ubiquitination and degradation, thereby inhibiting protein phosphatase 6 (PP6) complex activity and focal adhesion assembly during cell migration. As part of some ECS complex, catalyzes 'Lys-11'-linked ubiquitination and degradation of BTRC. ECS complexes and ARIH2 collaborate in tandem to mediate ubiquitination of target proteins; ARIH2 mediating addition of the first ubiquitin on CRLs targets. Specifically catalyzes the neddylation of CUL5 via its interaction with UBE2F. Does not catalyze neddylation of other cullins (CUL1, CUL2, CUL3, CUL4A or CUL4B). May play a role in protecting cells from apoptosis induced by redox agents. The polypeptide is RING-box protein 2 (Mus musculus (Mouse)).